Consider the following 216-residue polypeptide: Probable transaldolase (216 aa).

Lys-83 serves as the catalytic Schiff-base intermediate with substrate.

It belongs to the transaldolase family. Type 3B subfamily.

It is found in the cytoplasm. The catalysed reaction is D-sedoheptulose 7-phosphate + D-glyceraldehyde 3-phosphate = D-erythrose 4-phosphate + beta-D-fructose 6-phosphate. The protein operates within carbohydrate degradation; pentose phosphate pathway; D-glyceraldehyde 3-phosphate and beta-D-fructose 6-phosphate from D-ribose 5-phosphate and D-xylulose 5-phosphate (non-oxidative stage): step 2/3. Transaldolase is important for the balance of metabolites in the pentose-phosphate pathway. In Sorangium cellulosum (strain So ce56) (Polyangium cellulosum (strain So ce56)), this protein is Probable transaldolase.